The sequence spans 132 residues: Fluoride-specific ion channel FluC (132 aa).

Helical transmembrane passes span 6–26 (VLQL…RFIV), 41–61 (GTLV…ILMI), 73–93 (FLIV…FETY), and 104–124 (AMLN…LGIW). Gly80 and Thr83 together coordinate Na(+).

The protein belongs to the fluoride channel Fluc/FEX (TC 1.A.43) family.

It is found in the cell inner membrane. The catalysed reaction is fluoride(in) = fluoride(out). With respect to regulation, na(+) is not transported, but it plays an essential structural role and its presence is essential for fluoride channel function. In terms of biological role, fluoride-specific ion channel. Important for reducing fluoride concentration in the cell, thus reducing its toxicity. The protein is Fluoride-specific ion channel FluC of Hydrogenovibrio crunogenus (strain DSM 25203 / XCL-2) (Thiomicrospira crunogena).